Reading from the N-terminus, the 179-residue chain is Replication restart protein DnaT (179 aa).

The segment covering 151 to 168 (SRSSNGGMPQRDINSVSE) has biased composition (polar residues). A disordered region spans residues 151–179 (SRSSNGGMPQRDINSVSEPDNHIPPGFRG).

The protein belongs to the DnaT family. In terms of assembly, homooligomerizes. Interacts with PriB. Component of the replication restart primosome. Primosome assembly occurs via a 'hand-off' mechanism. PriA binds to replication forks, subsequently PriB then DnaT bind; DnaT then displaces ssDNA to generate the helicase loading substrate.

Involved in the restart of stalled replication forks, which reloads the replicative helicase on sites other than the origin of replication. Can function in multiple replication restart pathways. Displaces ssDNA from a PriB-ssDNA complex. Probably forms a spiral filament on ssDNA. In Salmonella schwarzengrund (strain CVM19633), this protein is Replication restart protein DnaT.